Here is a 372-residue protein sequence, read N- to C-terminus: MFQFEITSNCSNTDARTGIFHTPNGQVNTPRFMPVGTLGTVKGISSKQLTSTGSEMILSNTFHLHLQPGEKLVKESGGIHKFMNWPKPILTDSGGYQVFSLAKLNNISDKGVEFKNPRDGSHVFLSPEKVMQIQMDLGSDVAMAFDHCPPHTANENDIEDSLLRTHSWLQKCVETHQKSNQALFGIIQGGKYPRLREYSAKFTSSFDLPGIAVGGVSVGEAVEEIHSVINYIPKFLPINKPRYLMGIGSLREISLAVAKGFDIFDCVLPTRLGRHGTAFFNDQRLNLRNARFKNDFSPIDKTCKCETCKSYSRAYLHHLIRNDEILGLTLISLHNIAHLIRFTNAISNAIKDNCFTIDFAPWKTASIAHHTW.

The Proton acceptor role is filled by Asp92. Residues 92-96 (DSGGY), Asp146, Gln188, and Gly215 each bind substrate. An RNA binding region spans residues 246–252 (GIGSLRE). Asp265 serves as the catalytic Nucleophile. The segment at 270–274 (TRLGR) is RNA binding; important for wobble base 34 recognition. Residues Cys303, Cys305, Cys308, and His334 each contribute to the Zn(2+) site.

It belongs to the queuine tRNA-ribosyltransferase family. Homodimer. Within each dimer, one monomer is responsible for RNA recognition and catalysis, while the other monomer binds to the replacement base PreQ1. Requires Zn(2+) as cofactor.

The enzyme catalyses 7-aminomethyl-7-carbaguanine + guanosine(34) in tRNA = 7-aminomethyl-7-carbaguanosine(34) in tRNA + guanine. The protein operates within tRNA modification; tRNA-queuosine biosynthesis. Functionally, catalyzes the base-exchange of a guanine (G) residue with the queuine precursor 7-aminomethyl-7-deazaguanine (PreQ1) at position 34 (anticodon wobble position) in tRNAs with GU(N) anticodons (tRNA-Asp, -Asn, -His and -Tyr). Catalysis occurs through a double-displacement mechanism. The nucleophile active site attacks the C1' of nucleotide 34 to detach the guanine base from the RNA, forming a covalent enzyme-RNA intermediate. The proton acceptor active site deprotonates the incoming PreQ1, allowing a nucleophilic attack on the C1' of the ribose to form the product. After dissociation, two additional enzymatic reactions on the tRNA convert PreQ1 to queuine (Q), resulting in the hypermodified nucleoside queuosine (7-(((4,5-cis-dihydroxy-2-cyclopenten-1-yl)amino)methyl)-7-deazaguanosine). This is Queuine tRNA-ribosyltransferase from Prochlorococcus marinus (strain MIT 9312).